A 163-amino-acid chain; its full sequence is uncharacterized protein (163 aa).

2 helical membrane-spanning segments follow: residues 7 to 27 (YLNE…CYIV) and 51 to 71 (LVIF…LVWF).

Its subcellular location is the cell membrane. This is an uncharacterized protein from Rickettsia prowazekii (strain Madrid E).